Here is a 492-residue protein sequence, read N- to C-terminus: Auxin transporter-like protein 1 (492 aa).

Topologically, residues 1–67 are cytoplasmic; it reads MVPREQAEEA…DAWFSCASNQ (67 aa). Residues 68 to 85 traverse the membrane as a helical segment; the sequence is VAQVLLTLPYSFSQLGML. Residues 86 to 87 lie on the Extracellular side of the membrane; sequence SG. A helical membrane pass occupies residues 88-108; it reads VLLQLFYGFMGSWTAYLISVL. At 109–143 the chain is on the cytoplasmic side; sequence YVEYRSRKEKEGVSFKNHVIQWFEVLDGLLGPYWK. The helical transmembrane segment at 144–164 threads the bilayer; that stretch reads AAGLAFNCTFLLFGSVIQLIA. The Extracellular segment spans residues 165–180; that stretch reads CASNIYYINDRLDKRT. A helical membrane pass occupies residues 181 to 201; that stretch reads WTYIFGACCATTVFIPSFHNY. Residue R202 is a topological domain, cytoplasmic. The chain crosses the membrane as a helical span at residues 203 to 223; the sequence is IWSFLGLGMTTYTAWYLAIAA. Topologically, residues 224–240 are extracellular; the sequence is LLNGQAEGITHTGPTKL. A helical transmembrane segment spans residues 241–261; the sequence is VLYFTGATNILYTFGGHAVTV. Residues 262 to 274 lie on the Cytoplasmic side of the membrane; it reads EIMHAMWKPAKFK. The chain crosses the membrane as a helical span at residues 275 to 295; it reads YIYLLATLYVFTLTLPSASAM. Topologically, residues 296–322 are extracellular; that stretch reads YWAFGDELLTHSNAFSLLPKTGWRDAA. A helical membrane pass occupies residues 323–343; sequence VILMLIHQFITFGFACTPLYF. Residues 344–364 are Cytoplasmic-facing; it reads VWEKVIGMHDTKSICLRALAR. A helical transmembrane segment spans residues 365-385; it reads LPIVVPIWFLAIIFPFFGPIN. A topological domain (extracellular) is located at residue S386. A helical transmembrane segment spans residues 387–407; it reads AVGALLVSFTVYIIPALAHIL. Residues 408 to 432 lie on the Cytoplasmic side of the membrane; that stretch reads TYRTASARMNAAEKPPFFLPSWTGM. The chain crosses the membrane as a helical span at residues 433-453; the sequence is FVLNMFIVVWVLVVGFGLGGW. Residues 454–492 lie on the Extracellular side of the membrane; sequence ASMVNFIRQIDTFGLFAKCYQCPKPAPALAQSPVPLPHH.

It belongs to the amino acid/polyamine transporter 2 family. Amino acid/auxin permease (AAAP) (TC 2.A.18.1) subfamily.

It localises to the cell membrane. Carrier protein involved in proton-driven auxin influx. May mediate the formation of auxin gradient from developing leaves (site of auxin biosynthesis) to tips. The polypeptide is Auxin transporter-like protein 1 (Oryza sativa subsp. japonica (Rice)).